The sequence spans 338 residues: Glutamyl-tRNA reductase (338 aa).

Substrate contacts are provided by residues 50–53 (TCHR), S102, 107–109 (ETE), and Q113. The active-site Nucleophile is C51. NADP(+) is bound at residue 181-186 (GYSEIN).

It belongs to the glutamyl-tRNA reductase family. As to quaternary structure, homodimer.

It catalyses the reaction (S)-4-amino-5-oxopentanoate + tRNA(Glu) + NADP(+) = L-glutamyl-tRNA(Glu) + NADPH + H(+). Its pathway is porphyrin-containing compound metabolism; protoporphyrin-IX biosynthesis; 5-aminolevulinate from L-glutamyl-tRNA(Glu): step 1/2. In terms of biological role, catalyzes the NADPH-dependent reduction of glutamyl-tRNA(Glu) to glutamate 1-semialdehyde (GSA). In Chlamydia abortus (strain DSM 27085 / S26/3) (Chlamydophila abortus), this protein is Glutamyl-tRNA reductase.